The primary structure comprises 331 residues: Fructose-1,6-bisphosphatase class 1 (331 aa).

Mg(2+)-binding residues include Glu100, Asp120, Leu122, and Asp123. Substrate contacts are provided by residues 123 to 126, Asn216, Tyr243, 261 to 263, and Lys273; these read DGSS and YLY. Glu279 provides a ligand contact to Mg(2+).

The protein belongs to the FBPase class 1 family. As to quaternary structure, homotetramer. Mg(2+) serves as cofactor.

The protein resides in the cytoplasm. The catalysed reaction is beta-D-fructose 1,6-bisphosphate + H2O = beta-D-fructose 6-phosphate + phosphate. Its pathway is carbohydrate biosynthesis; gluconeogenesis. This Amoebophilus asiaticus (strain 5a2) protein is Fructose-1,6-bisphosphatase class 1.